Reading from the N-terminus, the 475-residue chain is NADH-ubiquinone oxidoreductase chain 2 (475 aa).

Transmembrane regions (helical) follow at residues 45–65 (LAVLALSFVAYLAWESIGIQY), 82–102 (APIVLLLIILVITLLVYLTTT), 112–132 (IALLMLVNLIGLILFPMVNDL), 133–153 (IPLYVIIELQSYSLYLLTGVY), 162–182 (AAILYFVTGGIASVLILLSSA), 198–220 (TYYSISGINTWTSFDILLIALVF), 240–260 (LYITAYISIVAKVSIMSFIYL), 262–282 (IHLFSTQLLILAFYLSVAVAA), 291–311 (IKSILAYSGILNFGYLLTAVL), 318–338 (YIYIIQYSLTHVTIFLCILAI), 365–385 (LCIALIVCLFSLIGIPPLPGF), 402–422 (LEALTIIVFSVIATYYYAYII), and 447–467 (FIISILMVILITFYMYLPTLL).

It belongs to the complex I subunit 2 family.

Its subcellular location is the mitochondrion inner membrane. It carries out the reaction a ubiquinone + NADH + 5 H(+)(in) = a ubiquinol + NAD(+) + 4 H(+)(out). In terms of biological role, core subunit of the mitochondrial membrane respiratory chain NADH dehydrogenase (Complex I) that is believed to belong to the minimal assembly required for catalysis. Complex I functions in the transfer of electrons from NADH to the respiratory chain. The immediate electron acceptor for the enzyme is believed to be ubiquinone. This chain is NADH-ubiquinone oxidoreductase chain 2 (NAD2), found in Candida albicans (strain SC5314 / ATCC MYA-2876) (Yeast).